A 257-amino-acid polypeptide reads, in one-letter code: Succinate dehydrogenase subunit 5, mitochondrial (257 aa).

The transit peptide at 1–89 (MGTLGRAIHT…AMGMGQVRRF (89 aa)) directs the protein to the mitochondrion.

Component of complex II composed of eight subunits in plants: four classical SDH subunits SDH1, SDH2, SDH3 and SDH4 (a flavoprotein (FP), an iron-sulfur protein (IP), and a cytochrome b composed of a large and a small subunit.), as well as four subunits unknown in mitochondria from bacteria and heterotrophic eukaryotes.

The protein resides in the mitochondrion inner membrane. The protein operates within carbohydrate metabolism; tricarboxylic acid cycle. The polypeptide is Succinate dehydrogenase subunit 5, mitochondrial (Arabidopsis thaliana (Mouse-ear cress)).